The chain runs to 545 residues: Chaperonin GroEL (545 aa).

ATP contacts are provided by residues 29-32, K50, 86-90, G415, and D495; these read TLGP and DGTTT.

Belongs to the chaperonin (HSP60) family. Forms a cylinder of 14 subunits composed of two heptameric rings stacked back-to-back. Interacts with the co-chaperonin GroES.

The protein resides in the cytoplasm. It catalyses the reaction ATP + H2O + a folded polypeptide = ADP + phosphate + an unfolded polypeptide.. Functionally, together with its co-chaperonin GroES, plays an essential role in assisting protein folding. The GroEL-GroES system forms a nano-cage that allows encapsulation of the non-native substrate proteins and provides a physical environment optimized to promote and accelerate protein folding. This Porphyromonas gingivalis (strain ATCC BAA-308 / W83) protein is Chaperonin GroEL.